A 315-amino-acid polypeptide reads, in one-letter code: Neuroguidin (315 aa).

2 disordered regions span residues 127–201 (SEND…KQKR) and 289–315 (VQDI…RKRK). Composition is skewed to basic and acidic residues over residues 159 to 168 (KTKEQKEPSG) and 182 to 200 (YDGD…EKQK). Residues 181–206 (HYDGDLTEADRQKERVEKQKRAALRS) are a coiled coil. Positions 296-315 (KPKKKKIIKKGKKKVFRKRK) are enriched in basic residues.

It belongs to the SAS10 family. As to quaternary structure, part of the small subunit (SSU) processome, composed of more than 70 proteins and the RNA chaperone small nucleolar RNA (snoRNA) U3.

Its subcellular location is the nucleus. It is found in the nucleolus. It localises to the chromosome. The protein resides in the centromere. The protein localises to the cytoplasm. Its subcellular location is the cell projection. It is found in the axon. It localises to the dendrite. The protein resides in the filopodium. In terms of biological role, part of the small subunit (SSU) processome, first precursor of the small eukaryotic ribosomal subunit. During the assembly of the SSU processome in the nucleolus, many ribosome biogenesis factors, an RNA chaperone and ribosomal proteins associate with the nascent pre-rRNA and work in concert to generate RNA folding, modifications, rearrangements and cleavage as well as targeted degradation of pre-ribosomal RNA by the RNA exosome. Its dissociation from the complex determines the transition from state pre-A1 to state pre-A1*. May inhibit mRNA translation. The protein is Neuroguidin (ngdn) of Danio rerio (Zebrafish).